A 28-amino-acid chain; its full sequence is Ranatuerin-2LTa (28 aa).

Cysteine 23 and cysteine 28 are disulfide-bonded.

In terms of tissue distribution, expressed by the skin glands.

It is found in the secreted. Has antibacterial activity. The chain is Ranatuerin-2LTa from Rana latastei (Italian agile frog).